The primary structure comprises 146 residues: VEWTNFERATIKDIFSKLEYDVVGPATLARCLVVYPWTQRYFGKFGNLYNAAAIAENAMVSKHGTTIIHGLDQAVKNMDDIKNTYAELSVLHCDKLHVDPDNFQLLAECLTIVLAAQLGKEFTGEVQAAFQKFMAVVVSSLGKQYH.

Residues 2–146 enclose the Globin domain; sequence EWTNFERATI…VVSSLGKQYH (145 aa). Heme b-binding residues include H63 and H92.

The protein belongs to the globin family. As to quaternary structure, hb2 is a heterotetramer of two alpha chains and two beta-2 chains. Red blood cells.

Involved in oxygen transport from gills to the various peripheral tissues. The protein is Hemoglobin subunit beta-2 (hbb2) of Cygnodraco mawsoni (Antarctic dragonfish).